A 328-amino-acid chain; its full sequence is Fructose-1,6-bisphosphatase class 1 (328 aa).

Residues E91, D110, L112, and D113 each contribute to the Mg(2+) site. Substrate contacts are provided by residues 113-116, N205, and 257-259; these read DGSS and YLY. Residue E277 coordinates Mg(2+).

Belongs to the FBPase class 1 family. In terms of assembly, homotetramer. The cofactor is Mg(2+).

It localises to the cytoplasm. The enzyme catalyses beta-D-fructose 1,6-bisphosphate + H2O = beta-D-fructose 6-phosphate + phosphate. Its pathway is carbohydrate biosynthesis; gluconeogenesis. The sequence is that of Fructose-1,6-bisphosphatase class 1 from Azorhizobium caulinodans (strain ATCC 43989 / DSM 5975 / JCM 20966 / LMG 6465 / NBRC 14845 / NCIMB 13405 / ORS 571).